The chain runs to 198 residues: Dephospho-CoA kinase (198 aa).

The region spanning 4-198 is the DPCK domain; that stretch reads FLGLTGGIAS…LSDLLQEIGR (195 aa). An ATP-binding site is contributed by 12–17; that stretch reads ASGKST.

This sequence belongs to the CoaE family.

Its subcellular location is the cytoplasm. It catalyses the reaction 3'-dephospho-CoA + ATP = ADP + CoA + H(+). Its pathway is cofactor biosynthesis; coenzyme A biosynthesis; CoA from (R)-pantothenate: step 5/5. Functionally, catalyzes the phosphorylation of the 3'-hydroxyl group of dephosphocoenzyme A to form coenzyme A. This is Dephospho-CoA kinase from Lactobacillus johnsonii (strain CNCM I-12250 / La1 / NCC 533).